Reading from the N-terminus, the 258-residue chain is UPF0246 protein CGSHiGG_08495 (258 aa).

The protein belongs to the UPF0246 family.

This Haemophilus influenzae (strain PittGG) protein is UPF0246 protein CGSHiGG_08495.